Consider the following 150-residue polypeptide: UPF0178 protein PP_5221 (150 aa).

This sequence belongs to the UPF0178 family.

The protein is UPF0178 protein PP_5221 of Pseudomonas putida (strain ATCC 47054 / DSM 6125 / CFBP 8728 / NCIMB 11950 / KT2440).